A 431-amino-acid chain; its full sequence is Asparagine--tRNA ligase 1 (431 aa).

The protein belongs to the class-II aminoacyl-tRNA synthetase family. Homodimer.

It is found in the cytoplasm. The enzyme catalyses tRNA(Asn) + L-asparagine + ATP = L-asparaginyl-tRNA(Asn) + AMP + diphosphate + H(+). In Lactiplantibacillus plantarum (strain ATCC BAA-793 / NCIMB 8826 / WCFS1) (Lactobacillus plantarum), this protein is Asparagine--tRNA ligase 1 (asnS1).